We begin with the raw amino-acid sequence, 483 residues long: Altronate oxidoreductase (483 aa).

18 to 29 (IIQFGEGNFLRA) serves as a coordination point for NAD(+).

Belongs to the mannitol dehydrogenase family. UxaB subfamily.

The catalysed reaction is D-altronate + NAD(+) = keto-D-tagaturonate + NADH + H(+). Its pathway is carbohydrate metabolism; pentose and glucuronate interconversion. The polypeptide is Altronate oxidoreductase (Escherichia coli O6:K15:H31 (strain 536 / UPEC)).